The primary structure comprises 1674 residues: Kinesin-like protein KIF21A (1674 aa).

M1 carries the post-translational modification N-acetylmethionine. Residues 9–371 (SVRVAVRIRP…LKYANRARNI (363 aa)) form the Kinesin motor domain. Residue 88–95 (GQTGAGKT) participates in ATP binding. A coiled-coil region spans residues 365 to 575 (ANRARNIKNK…NREERSVAGK (211 aa)). S524 is subject to Phosphoserine. 3 disordered regions span residues 556–641 (KKRL…DEKA), 779–804 (EEQE…DQRK), and 841–881 (SDKV…AQQK). Positions 560–597 (QKLEESNREERSVAGKEDNTDTDQEKKEEKGVSERENN) are enriched in basic and acidic residues. Positions 598-637 (ELEVEESQEVSDHEDEEEEEEEEEDDIDGGESSDESDSES) are enriched in acidic residues. A compositionally biased stretch (polar residues) spans 851 to 865 (KLSSSDAPAQDTGSS). 2 coiled-coil regions span residues 931–1019 (TDII…AKEE) and 1053–1083 (LQAA…NQLL). Positions 1116-1138 (VEDSTDEDAPLNSPGSEGSTLSS) are disordered. The segment covering 1128–1138 (SPGSEGSTLSS) has biased composition (polar residues). The segment at 1146–1167 (EVKPKNKARRRTTTQMELLYAD) is interaction with KANK1 and KANK2. Polar residues-rich tracts occupy residues 1170–1179 (ELASDTSTGD) and 1196–1205 (GMNTETSGTS). A disordered region spans residues 1170–1318 (ELASDTSTGD…SSLSEVHRSS (149 aa)). Phosphoserine is present on residues S1212, S1225, S1229, and S1239. Basic and acidic residues predominate over residues 1245 to 1262 (KAYEKAEKSKAKEQKHSD). Positions 1288 to 1297 (NRLTVSQGNT) are enriched in polar residues. WD repeat units follow at residues 1345–1382 (GHTK…EIMS), 1385–1423 (GHPN…KCIR), 1449–1487 (SGEN…STGK), 1490–1532 (GHLG…LGTV), 1541–1578 (PHYD…LLQQ), 1582–1621 (AHKD…PVGE), and 1624–1661 (GHDS…DGQI). S1662 carries the phosphoserine modification. Residue T1664 is modified to Phosphothreonine. A Phosphoserine modification is found at S1673.

The protein belongs to the TRAFAC class myosin-kinesin ATPase superfamily. Kinesin family. As to quaternary structure, part of a cortical microtubule stabilization complex (CMSC) composed of KANK1, PPFIA1, PPFIBP1, ERC1/ELKS, PHLDB2/LL5beta, CLASPs, KIF21A and possibly additional interactors; within CMSCs KANK1 and PHLDB2/LL5beta seem to be the core components for recruiting microtubule-binding proteins KIF21A and CLASPs, whereas PPFIA1, PPFIBP1 and ERC1/ELKS serve as scaffolds for protein clustering. Interacts (via residues 1146-1167) with KANK1 (via ankyrin repeats 1-5) and KANK2 (via ankyrin repeats 1-5).

Its subcellular location is the cytoplasm. The protein localises to the cytoskeleton. The protein resides in the cell cortex. It localises to the cell projection. It is found in the axon. Its subcellular location is the dendrite. The protein localises to the growth cone. Its function is as follows. Processive microtubule plus-end directed motor protein involved in neuronal axon guidance. Is recruited by KANK1 to cortical microtubule stabilizing complexes (CMSCs) at focal adhesions (FAs) rims where it promotes microtubule capture and stability. Controls microtubule polymerization rate at axonal growth cones and suppresses microtubule growth without inducing microtubule disassembly once it reaches the cell cortex. The chain is Kinesin-like protein KIF21A (KIF21A) from Homo sapiens (Human).